The chain runs to 107 residues: Large ribosomal subunit protein bL21 (107 aa).

This sequence belongs to the bacterial ribosomal protein bL21 family. As to quaternary structure, part of the 50S ribosomal subunit. Contacts protein L20.

Its function is as follows. This protein binds to 23S rRNA in the presence of protein L20. The polypeptide is Large ribosomal subunit protein bL21 (Chlamydia trachomatis serovar L2 (strain ATCC VR-902B / DSM 19102 / 434/Bu)).